Reading from the N-terminus, the 196-residue chain is Probable GTP-binding protein EngB (196 aa).

Residues 22–194 form the EngB-type G domain; the sequence is DKKEIAFAGR…LKTIGEILGD (173 aa). Residues 30 to 37, 56 to 60, 74 to 77, 141 to 144, and 173 to 175 contribute to the GTP site; these read GRSNVGKS, GKTRS, DLPG, TKSD, and FSS. Residues S37 and T58 each coordinate Mg(2+).

The protein belongs to the TRAFAC class TrmE-Era-EngA-EngB-Septin-like GTPase superfamily. EngB GTPase family. The cofactor is Mg(2+).

Necessary for normal cell division and for the maintenance of normal septation. The sequence is that of Probable GTP-binding protein EngB from Petrotoga mobilis (strain DSM 10674 / SJ95).